Consider the following 529-residue polypeptide: MNNRGNNDDLDHHYGVFNDFERRMTSRKKSVLDNTSPMIWKTVSERKSSPGIEGLNLSSFDRPMAPTTEIRELRVFLATWNVGGRTPNNDLNLEDFLLVEGTADLYICGFQEIVPLSAGNVLVVEDNEPAAKWLALISQALNKPKQESVYSNAAYSASRTTTCSSSSCGSEESRAPSSLSFFQRPNLKVLSRNYRVDSSLLKTCNCPVIDTSVGWEARRSKRFSDPSTDSSNNVEPENFRVHENFLFDDVPATTKMPGQMSYRLIASKQMVGLFLSVWARRELIPHISHLRLDSVGRGIMGRLGNKGCIAISMSLHQTSFCFVCSHLASGEKEGDELRRNADVAEILKHTQFPKLTKNPNCHAPERIIDHDRVLWLGDLNYRVALTYEETRVLLEDNDWDTLLERDQLNMERGAGRVFSGFQEGQIFFAPTYKYSQNSDAYAGEMTKSKKKRRTPAWCDRILWKGEGIEQLSYIRGESRFSDHRPVCAIFAVEVDVKSLNKGRFRKGYSCAAVRLVEDVAIPQRHSFYD.

Catalytic stretches follow at residues D371–T386 and K451–E466.

Belongs to the inositol polyphosphate 5-phosphatase family.

In terms of biological role, may be involved in the regulation of root hairs development. Required for restricting both the size of the root-hair initiation site and the width of the root hairs during the transition to tip growth, but is not required for normal subsequent tip growth. The polypeptide is Type I inositol polyphosphate 5-phosphatase 5 (Arabidopsis thaliana (Mouse-ear cress)).